The chain runs to 248 residues: ATP synthase subunit a, chloroplastic (248 aa).

Helical transmembrane passes span 37-57, 96-116, 135-155, 200-220, and 221-241; these read AQVL…SIVA, VPFI…GALF, INTT…AGLH, LVVA…MMFL, and GLFT…AYIG.

The protein belongs to the ATPase A chain family. As to quaternary structure, F-type ATPases have 2 components, CF(1) - the catalytic core - and CF(0) - the membrane proton channel. CF(1) has five subunits: alpha(3), beta(3), gamma(1), delta(1), epsilon(1). CF(0) has four main subunits: a, b, b' and c.

The protein resides in the plastid. It localises to the chloroplast thylakoid membrane. Key component of the proton channel; it plays a direct role in the translocation of protons across the membrane. This is ATP synthase subunit a, chloroplastic from Angiopteris evecta (Mule's foot fern).